A 283-amino-acid polypeptide reads, in one-letter code: 4-diphosphocytidyl-2-C-methyl-D-erythritol kinase (283 aa).

K10 is a catalytic residue. ATP is bound at residue 99 to 109 (PMGGGLGGGSS). D141 is a catalytic residue.

This sequence belongs to the GHMP kinase family. IspE subfamily. As to quaternary structure, homodimer.

It catalyses the reaction 4-CDP-2-C-methyl-D-erythritol + ATP = 4-CDP-2-C-methyl-D-erythritol 2-phosphate + ADP + H(+). The protein operates within isoprenoid biosynthesis; isopentenyl diphosphate biosynthesis via DXP pathway; isopentenyl diphosphate from 1-deoxy-D-xylulose 5-phosphate: step 3/6. Catalyzes the phosphorylation of the position 2 hydroxy group of 4-diphosphocytidyl-2C-methyl-D-erythritol. The sequence is that of 4-diphosphocytidyl-2-C-methyl-D-erythritol kinase from Escherichia coli O9:H4 (strain HS).